The chain runs to 381 residues: Phenylalanine dehydrogenase (381 aa).

Position 55 (R55) interacts with NAD(+). Residue K79 participates in L-phenylalanine binding. K91 is an active-site residue. NAD(+) is bound by residues D126, S157, T161, 191 to 197 (GLGKVGY), 214 to 215 (DI), 254 to 255 (AM), and 275 to 277 (SAN). N277 provides a ligand contact to L-phenylalanine.

This sequence belongs to the Glu/Leu/Phe/Val dehydrogenases family.

It carries out the reaction L-phenylalanine + NAD(+) + H2O = 3-phenylpyruvate + NH4(+) + NADH + H(+). It participates in amino-acid biosynthesis; L-phenylalanine biosynthesis; L-phenylalanine from phenylpyruvate (PDH route): step 1/1. Functionally, catalyzes the reversible NAD(+)-dependent oxidative deamination of L-phenylalanine to phenylpyruvate. The polypeptide is Phenylalanine dehydrogenase (Lysinibacillus sphaericus (Bacillus sphaericus)).